Here is an 831-residue protein sequence, read N- to C-terminus: Probable beta-glucosidase H (831 aa).

A glycan (N-linked (GlcNAc...) asparagine) is linked at N13. D225 is a catalytic residue. The region spanning 389–549 (RLLSNAVIHF…DAEEMINRAV (161 aa)) is the PA14 domain. N-linked (GlcNAc...) asparagine glycosylation is found at N474, N514, N604, N629, N726, and N823.

The protein belongs to the glycosyl hydrolase 3 family.

The protein resides in the secreted. The catalysed reaction is Hydrolysis of terminal, non-reducing beta-D-glucosyl residues with release of beta-D-glucose.. Its pathway is glycan metabolism; cellulose degradation. Its function is as follows. Beta-glucosidases are one of a number of cellulolytic enzymes involved in the degradation of cellulosic biomass. Catalyzes the last step releasing glucose from the inhibitory cellobiose. This Emericella nidulans (strain FGSC A4 / ATCC 38163 / CBS 112.46 / NRRL 194 / M139) (Aspergillus nidulans) protein is Probable beta-glucosidase H (bglH).